We begin with the raw amino-acid sequence, 736 residues long: Dynamin-1-like protein (736 aa).

M1 is modified (N-acetylmethionine). The Dynamin-type G domain occupies 22–302; the sequence is IIQLPQIVVV…LMHHIRDCLP (281 aa). A G1 motif region spans residues 32-39; it reads GTQSSGKS. Residue 32–40 coordinates GTP; sequence GTQSSGKSS. A G2 motif region spans residues 58–60; sequence VTR. The G3 motif stretch occupies residues 146–149; it reads DLPG. The segment at 215–218 is G4 motif; that stretch reads TKLD. Residues 215 to 221 and 246 to 249 each bind GTP; these read TKLDLMD and NRSQ. The tract at residues 245–248 is G5 motif; that stretch reads VNRS. Residues 344–489 form a middle domain region; it reads YCNTIEGTAK…NEMVHNLVAI (146 aa). The tract at residues 448–685 is interaction with GSK3B; the sequence is NYSTQELLRF…NHVKDTLQSE (238 aa). Positions 502–569 are b domain; sequence ADACGLMNNN…IQDSRRETKN (68 aa). A disordered region spans residues 523–590; sequence ELPSAVSRDK…VQEPTTGNWR (68 aa). Position 529 is a phosphoserine (S529). Residues K532 and K535 each participate in a glycyl lysine isopeptide (Lys-Gly) (interchain with G-Cter in SUMO) cross-link. Positions 537-554 are enriched in low complexity; the sequence is PSALAPASQEPSPAASAE. The residue at position 548 (S548) is a Phosphoserine. Basic and acidic residues predominate over residues 555–568; that stretch reads ADGKLIQDSRRETK. Residues K558 and K568 each participate in a glycyl lysine isopeptide (Lys-Gly) (interchain with G-Cter in SUMO) cross-link. O-linked (GlcNAc) threonine glycosylation is found at T585 and T586. A Glycyl lysine isopeptide (Lys-Gly) (interchain with G-Cter in SUMO) cross-link involves residue K594. K597 is modified (N6-acetyllysine; alternate). A Glycyl lysine isopeptide (Lys-Gly) (interchain with G-Cter in SUMO); alternate cross-link involves residue K597. A Glycyl lysine isopeptide (Lys-Gly) (interchain with G-Cter in SUMO) cross-link involves residue K606. S607 carries the phosphoserine modification. K608 is covalently cross-linked (Glycyl lysine isopeptide (Lys-Gly) (interchain with G-Cter in SUMO)). S616 is subject to Phosphoserine; by CDK1 and PINK1. Residue S637 is modified to Phosphoserine; by CAMK1 and PKA. Residue C644 is modified to S-nitrosocysteine. Residues 644–735 form the GED domain; the sequence is CEVIERLIKS…IIAEIRETHL (92 aa). Positions 654 to 668 are important for homodimerization; sequence YFLIVRKNIQDSVPK.

It belongs to the TRAFAC class dynamin-like GTPase superfamily. Dynamin/Fzo/YdjA family. In terms of assembly, homotetramer; dimerizes through the N-terminal GTP-middle region of one molecule binding to the GED domain of another DNM1L molecule. Oligomerizes in a GTP-dependent manner to form membrane-associated tubules with a spiral pattern. Interacts with GSK3B and MARCHF5. Interacts (via the GTPase and B domains) with UBE2I; the interaction promotes sumoylation of DNM1L, mainly in its B domain. Interacts with PPP3CA; the interaction dephosphorylates DNM1L and regulates its transition to mitochondria. Interacts with BCL2L1 isoform BCL-X(L) and CLTA; DNM1L and BCL2L1 isoform BCL-X(L) may form a complex in synaptic vesicles that also contains clathrin and MFF. Interacts with MFF; the interaction is inhibited by C11orf65/MFI. Interacts with FIS1; may form part of a larger protein complex at the endoplasmic reticulum-mitochondrial interface during mitochondrial fission. Interacts with CANX. Interacts with BCAP31. Interacts with MIEF2 and MIEF1; GTP-dependent, regulates GTP hydrolysis and DNM1L oligomerization. Interacts with PGAM5; this interaction leads to dephosphorylation at Ser-656 and activation of GTPase activity and eventually to mitochondria fragmentation. Interacts with RALBP1; during mitosis, recruits DNM1L to the mitochondrion and mediates its activation by the mitotic kinase cyclin B-CDK1. Interacts with FUNDC1; this interaction recruits DNM1L/DRP1 at ER-mitochondria contact sites. Phosphorylation/dephosphorylation events on two sites near the GED domain regulate mitochondrial fission. Phosphorylation on Ser-637 by CAMK1 and PKA inhibits the GTPase activity, leading to a defect in mitochondrial fission promoting mitochondrial elongation. Dephosphorylated on this site by PPP3CA which promotes mitochondrial fission. Phosphorylation on Ser-616 by CDK1 and PINK1 activates the GTPase activity and promotes mitochondrial fission. Phosphorylated in a circadian manner at Ser-637. Dephosphorylated by PGAM5. In terms of processing, sumoylated on various lysine residues within the B domain, probably by MUL1. Sumoylation positively regulates mitochondrial fission. Desumoylated by SENP5 during G2/M transition of mitosis. Appears to be linked to its catalytic activity. Post-translationally, S-nitrosylation increases DNM1L dimerization, mitochondrial fission and causes neuronal damage. Ubiquitination by MARCHF5 affects mitochondrial morphology. In terms of processing, O-GlcNAcylation augments the level of the GTP-bound active form of DNM1L and induces translocation from the cytoplasm to mitochondria in cardiomyocytes. It also decreases phosphorylation at Ser-637. In terms of tissue distribution, ubiquitously expressed with highest levels found in skeletal muscles, heart, kidney and brain. Isoform 1 is brain-specific. Isoform 2 and isoform 3 are predominantly expressed in testis and skeletal muscles respectively. Isoform 4 is weakly expressed in brain, heart and kidney. Isoform 5 is dominantly expressed in liver, heart and kidney. Isoform 6 is expressed in neurons.

It is found in the cytoplasm. The protein resides in the cytosol. The protein localises to the golgi apparatus. Its subcellular location is the endomembrane system. It localises to the mitochondrion outer membrane. It is found in the peroxisome. The protein resides in the membrane. The protein localises to the clathrin-coated pit. Its subcellular location is the cytoplasmic vesicle. It localises to the secretory vesicle. It is found in the synaptic vesicle membrane. The enzyme catalyses GTP + H2O = GDP + phosphate + H(+). Its activity is regulated as follows. GTPase activity is increased by binding to phospholipid membranes. Its function is as follows. Functions in mitochondrial and peroxisomal division. Mediates membrane fission through oligomerization into membrane-associated tubular structures that wrap around the scission site to constrict and sever the mitochondrial membrane through a GTP hydrolysis-dependent mechanism. The specific recruitment at scission sites is mediated by membrane receptors like MFF, MIEF1 and MIEF2 for mitochondrial membranes. While the recruitment by the membrane receptors is GTP-dependent, the following hydrolysis of GTP induces the dissociation from the receptors and allows DNM1L filaments to curl into closed rings that are probably sufficient to sever a double membrane. Acts downstream of PINK1 to promote mitochondrial fission in a PRKN-dependent manner. Plays an important role in mitochondrial fission during mitosis. Through its function in mitochondrial division, ensures the survival of at least some types of postmitotic neurons, including Purkinje cells, by suppressing oxidative damage. Required for normal brain development, including that of cerebellum. Facilitates developmentally regulated apoptosis during neural tube formation. Required for a normal rate of cytochrome c release and caspase activation during apoptosis; this requirement may depend upon the cell type and the physiological apoptotic cues. Required for formation of endocytic vesicles. Proposed to regulate synaptic vesicle membrane dynamics through association with BCL2L1 isoform Bcl-X(L) which stimulates its GTPase activity in synaptic vesicles; the function may require its recruitment by MFF to clathrin-containing vesicles. Required for programmed necrosis execution. Rhythmic control of its activity following phosphorylation at Ser-637 is essential for the circadian control of mitochondrial ATP production. In terms of biological role, inhibits peroxisomal division when overexpressed. This is Dynamin-1-like protein from Homo sapiens (Human).